Consider the following 248-residue polypeptide: MATKAPEKITKPKDRDFLNHLETYLSKRDGVDKLLKISRYATKIILASSLIPETRSIIPRLKSFESSVGVSRKAFRLGKFVQDINALRSSRWDSNHELVLLIIAYGGEGLYYFVEQFIWLTKSGLIDAKHSKWLQKISAWAELVGYVGSVSIKIRDLRKLNDEESCVASTIEISVSRGLACDGEDEKMKMIKEKKTLKVLSILQDLADGLMTIADIRDGKGVLSAPNVISSAGLFSAIVSTHKNWISC.

The Cytoplasmic segment spans residues 1-97 (MATKAPEKIT…RSSRWDSNHE (97 aa)). A helical transmembrane segment spans residues 98–118 (LVLLIIAYGGEGLYYFVEQFI). Topologically, residues 119–220 (WLTKSGLIDA…MTIADIRDGK (102 aa)) are lumenal. A helical membrane pass occupies residues 221–241 (GVLSAPNVISSAGLFSAIVST). Residues 242–248 (HKNWISC) are Cytoplasmic-facing.

This sequence belongs to the peroxin-11 family. In terms of assembly, homooligomer. Interacts with ARC5 and FIS1B on peroxisomes. As to expression, expressed in developing siliques.

The protein localises to the peroxisome membrane. In terms of biological role, involved in peroxisomal proliferation. Promotes peroxisomal duplication, aggregation or elongation without fission. In Arabidopsis thaliana (Mouse-ear cress), this protein is Peroxisomal membrane protein 11A (PEX11A).